Reading from the N-terminus, the 89-residue chain is Small ribosomal subunit protein bS16 (89 aa).

The protein belongs to the bacterial ribosomal protein bS16 family.

The chain is Small ribosomal subunit protein bS16 from Chloroflexus aurantiacus (strain ATCC 29364 / DSM 637 / Y-400-fl).